The primary structure comprises 629 residues: MNESVAKKTQETLGKVIKKPPLTEKLLSKPPFRYLHDIFSEVIRTTGFMKGLYVEAEMKSDNVKDKDSKIAFLQKAIDVVMLVSGEPLAAKPARIVAGHEPEKTNELLQVIAKCCLNKLSSDEAVKRVLAGDKLDQKGKPSTSRSQDKENREGREHHRDREERKGIKESSGSREQKDPDQPKDQESKRDDKDRRRDAERSDKGRERERTKDRDRDKDKSRDREKDKTREKEREREKDRNREKERERDKDRDKKKERESHKDRERDKDREREKRREKEKDKERPRETEEKLKDRGDRKIKAAEEISKSKPQPEVASRTHQAETEEAESPSRIPRPSSAKGQRRKPKTGGQGTEQDETESEGEAEGPSAEKPIPLENGDVTDPAALQTTHSRRLPRPSSARPAAPRVKRQESYTDATPAERLGSGKTPASVILDGKKLSEDEDDEDGQFVVEEAAPPPSDVPEVESNSLELQGDDKHGGLVKKILETKKDYESSPSSKSKEQDRSLVSEASRKKERELVAREIERLRSSIQTVCRSALPLGKIMDYIQEDMDSMQNELQSWRKENKENAQALLQEQRITDGVVEPLKVELAELEQLIKDQQDKICAVKSNILKNEEKIQKMVSSISFSSQT.

Positions 130–511 (AGDKLDQKGK…RSLVSEASRK (382 aa)) are disordered. Residues 145–306 (SQDKENREGR…KIKAAEEISK (162 aa)) are compositionally biased toward basic and acidic residues. Positions 220–282 (RDREKDKTRE…RREKEKDKER (63 aa)) form a coiled coil. Residues 352-362 (EQDETESEGEA) show a composition bias toward acidic residues. Positions 394 to 403 (RPSSARPAAP) are enriched in low complexity. Residues 471–511 (GDDKHGGLVKKILETKKDYESSPSSKSKEQDRSLVSEASRK) show a composition bias toward basic and acidic residues. The stretch at 511 to 602 (KKERELVARE…QLIKDQQDKI (92 aa)) forms a coiled coil.

It belongs to the TRAF3IP1 family. Component of the IFT complex B, at least composed of ift20, ift22, ift25, ift27, ift46, ift52, traf3ip1/ift54, ift57, ift74, ift80, ift81, and ift88. Interacts with ift88. Interacts with il13ra1. Binds to microtubules, traf3 and disc1. Interacts with map4.

Its subcellular location is the cytoplasm. The protein resides in the cytoskeleton. It localises to the cell projection. The protein localises to the cilium. It is found in the cilium axoneme. Its subcellular location is the cilium basal body. Its function is as follows. Plays an inhibitory role on IL13 signaling by binding to IL13RA1 and recruits TRAF3 and DISC1 to the microtubules. Involved in the regulation of microtubule cytoskeleton organization. Is a negative regulator of microtubule stability, acting through the control of MAP4 levels. Involved in ciliogenesis. This Danio rerio (Zebrafish) protein is TRAF3-interacting protein 1 (traf3ip1).